Consider the following 514-residue polypeptide: Peptide chain release factor 3 (514 aa).

Residues 8–268 (KKRRTFAIIS…IFLKFAPEPH (261 aa)) enclose the tr-type G domain. Residues 17-24 (SHPDAGKT), 85-89 (DTPGH), and 139-142 (NKLD) contribute to the GTP site.

It belongs to the TRAFAC class translation factor GTPase superfamily. Classic translation factor GTPase family. PrfC subfamily.

The protein resides in the cytoplasm. In terms of biological role, increases the formation of ribosomal termination complexes and stimulates activities of RF-1 and RF-2. It binds guanine nucleotides and has strong preference for UGA stop codons. It may interact directly with the ribosome. The stimulation of RF-1 and RF-2 is significantly reduced by GTP and GDP, but not by GMP. The polypeptide is Peptide chain release factor 3 (Streptococcus pneumoniae (strain CGSP14)).